The primary structure comprises 304 residues: Aspartate carbamoyltransferase catalytic subunit (304 aa).

Arginine 57 and threonine 58 together coordinate carbamoyl phosphate. Lysine 86 contacts L-aspartate. Carbamoyl phosphate is bound by residues arginine 107, histidine 135, and glutamine 138. 2 residues coordinate L-aspartate: arginine 168 and arginine 229. Carbamoyl phosphate contacts are provided by leucine 266 and proline 267.

The protein belongs to the aspartate/ornithine carbamoyltransferase superfamily. ATCase family. As to quaternary structure, heterooligomer of catalytic and regulatory chains.

It carries out the reaction carbamoyl phosphate + L-aspartate = N-carbamoyl-L-aspartate + phosphate + H(+). The protein operates within pyrimidine metabolism; UMP biosynthesis via de novo pathway; (S)-dihydroorotate from bicarbonate: step 2/3. Functionally, catalyzes the condensation of carbamoyl phosphate and aspartate to form carbamoyl aspartate and inorganic phosphate, the committed step in the de novo pyrimidine nucleotide biosynthesis pathway. The chain is Aspartate carbamoyltransferase catalytic subunit from Methanosphaera stadtmanae (strain ATCC 43021 / DSM 3091 / JCM 11832 / MCB-3).